A 380-amino-acid chain; its full sequence is MAMNIRKTHPLIKIVNNSLIDLPTPSNISIWWNFGSLLGLCLIIQILTGLFLAMHYTADISSAFSSVAHICRDVNYGWLIRNTHANGASMFFICVYLHIARGLYYGSYLNKETWNIGVIILLLLMATAFVGYVLPWGQMSFWGATVITNLLSALPYIGDMLVQWIWGGFSVDSATLTRFFTFHFLLPFVIVALTMVHLLFLHEAGSNNPTGLISNMDKIPFHPYYSYKDLLGFFILLFFLTFLALFTPNLLTDAENFIPANPLVTPPHIKPEWYFLFAYAILRSIPNKLGGVLALAFSILILLLVPILHTSKQRSLTFRPISQLLFWLLVANTIILTWIGGQPVEQPFITIGQIASITYFSFFLILFPIAGWWENKMLNL.

4 consecutive transmembrane segments (helical) span residues 34-54, 78-99, 114-134, and 179-199; these read FGSLLGLCLIIQILTGLFLAM, WLIRNTHANGASMFFICVYLHI, WNIGVIILLLLMATAFVGYVL, and FFTFHFLLPFVIVALTMVHLL. The heme b site is built by His-84 and His-98. The heme b site is built by His-183 and His-197. His-202 contributes to the a ubiquinone binding site. 4 helical membrane passes run 227 to 247, 289 to 309, 321 to 341, and 348 to 368; these read YKDLLGFFILLFFLTFLALFT, LGGVLALAFSILILLLVPILH, ISQLLFWLLVANTIILTWIGG, and FITIGQIASITYFSFFLILFP.

It belongs to the cytochrome b family. In terms of assembly, the cytochrome bc1 complex contains 3 respiratory subunits (MT-CYB, CYC1 and UQCRFS1), 2 core proteins (UQCRC1 and UQCRC2) and probably 6 low-molecular weight proteins. Heme b serves as cofactor.

The protein localises to the mitochondrion inner membrane. In terms of biological role, component of the ubiquinol-cytochrome c reductase complex (complex III or cytochrome b-c1 complex) that is part of the mitochondrial respiratory chain. The b-c1 complex mediates electron transfer from ubiquinol to cytochrome c. Contributes to the generation of a proton gradient across the mitochondrial membrane that is then used for ATP synthesis. In Pastinachus sephen (Cowtail stingray), this protein is Cytochrome b (mt-cyb).